Here is a 288-residue protein sequence, read N- to C-terminus: Eukaryotic translation initiation factor 3 subunit F-2 (288 aa).

The MPN domain occupies 12–149 (VLLHPLVLFQ…TRIFCAVATG (138 aa)).

It belongs to the eIF-3 subunit F family. As to quaternary structure, component of the eukaryotic translation initiation factor 3 (eIF-3) complex. The eIF-3 complex interacts with pix.

Its subcellular location is the cytoplasm. Functionally, component of the eukaryotic translation initiation factor 3 (eIF-3) complex, which is involved in protein synthesis of a specialized repertoire of mRNAs and, together with other initiation factors, stimulates binding of mRNA and methionyl-tRNAi to the 40S ribosome. The eIF-3 complex specifically targets and initiates translation of a subset of mRNAs involved in cell proliferation. The chain is Eukaryotic translation initiation factor 3 subunit F-2 from Drosophila persimilis (Fruit fly).